A 344-amino-acid polypeptide reads, in one-letter code: Olfactory receptor class A-like protein 4 (344 aa).

At M1–V10 the chain is on the extracellular side. The chain crosses the membrane as a helical span at residues L11–F31. Residues D32–T47 lie on the Cytoplasmic side of the membrane. The helical transmembrane segment at I48 to F68 threads the bilayer. Topologically, residues V69–R84 are extracellular. C83 and C169 are oxidised to a cystine. The chain crosses the membrane as a helical span at residues V85–S105. Residues A106–R130 lie on the Cytoplasmic side of the membrane. The helical transmembrane segment at V131 to V151 threads the bilayer. The Extracellular portion of the chain corresponds to Y152–Q186. N159 is a glycosylation site (N-linked (GlcNAc...) asparagine). The helical transmembrane segment at G187–V207 threads the bilayer. The Cytoplasmic segment spans residues G208–H246. A helical transmembrane segment spans residues V247–T267. Topologically, residues Y268–G279 are extracellular. The helical transmembrane segment at L280–A300 threads the bilayer. The Cytoplasmic segment spans residues L301–K344. A compositionally biased stretch (basic and acidic residues) spans T324–R337. Residues T324 to K344 form a disordered region.

It belongs to the G-protein coupled receptor 1 family. As to expression, highly expressed in the olfactory rosette. Specifically localizes to crypt neurons in the olfactory neuroepithelium. Colocalizes with the inhibitory G-protein gnaia in crypt neurons. Not detected in other tissues tested.

The protein resides in the cell membrane. Probable olfactory receptor. This Danio rerio (Zebrafish) protein is Olfactory receptor class A-like protein 4 (ora4).